The primary structure comprises 211 residues: Large ribosomal subunit protein uL3 (211 aa).

Belongs to the universal ribosomal protein uL3 family. Part of the 50S ribosomal subunit. Forms a cluster with proteins L14 and L19.

Its function is as follows. One of the primary rRNA binding proteins, it binds directly near the 3'-end of the 23S rRNA, where it nucleates assembly of the 50S subunit. This chain is Large ribosomal subunit protein uL3, found in Desulfatibacillum aliphaticivorans.